We begin with the raw amino-acid sequence, 212 residues long: uncharacterized protein (212 aa).

It belongs to the methyltransferase superfamily.

This is an uncharacterized protein from Synechocystis sp. (strain ATCC 27184 / PCC 6803 / Kazusa).